The following is a 451-amino-acid chain: UDP-N-acetylmuramoylalanine--D-glutamate ligase (451 aa).

ATP is bound at residue 119–125; it reads GSNGKTT.

This sequence belongs to the MurCDEF family.

Its subcellular location is the cytoplasm. It catalyses the reaction UDP-N-acetyl-alpha-D-muramoyl-L-alanine + D-glutamate + ATP = UDP-N-acetyl-alpha-D-muramoyl-L-alanyl-D-glutamate + ADP + phosphate + H(+). The protein operates within cell wall biogenesis; peptidoglycan biosynthesis. Functionally, cell wall formation. Catalyzes the addition of glutamate to the nucleotide precursor UDP-N-acetylmuramoyl-L-alanine (UMA). The polypeptide is UDP-N-acetylmuramoylalanine--D-glutamate ligase (Streptococcus agalactiae serotype III (strain NEM316)).